Here is a 774-residue protein sequence, read N- to C-terminus: MTAPTESSPFSPADLARHRLSPQEYRRITELIGRHPNLNELGMFSVMWSEHCCYKNSRPLLKGFPTTGPRVLVGPGENAGVIDIGDGLRVAFKIESHNHPSAVEPFQGAATGVGGILRDIFTMGARPIASLNSLRFGPLEDARNRALFRGVVHGIGHYGNCVGVPTVGGEVYFDPTYSGNPLVNAMAIGVLETPEIVRSGAAGIGNPVLYVGSTTGRDGMGGASFASAELSDASQKDRPAVQVGDPFTEKSLIEACLEAFRTGAVVAAQDMGAAGLTCSSSEMAAKGGVGIEMDLDLVPVRETGMVPYEFLLSESQERMLFVAEKGREGELIALFERWGLHAVVVGRVIGEPLVRIFHSGKVVAELPARALTDDAPVYPRAVLPEPPAAILKLRAFDWHSLAEPTDYAEALLTLLDSPTIGSKSWVYRQYDHQVQNNTVIVPGAADAAVIRVRPQSFGPGEVEAVPFTERGIAATVDCNSRYVYLDPYRGAMLAVAEAARNLSCVGATPLAVTDNLNFGSPEKPEGYWQLAMACRGIADACLELMTPVTGGNVSLYNETQSDGRTTAIYPTPTIGMVGLVEDIHRTCSQNFKSPGDLVYLLGGGEPTLGGSEYLACLHGVAAGEPPVLDMALEIQVQSVCRLGIERGLFKSAHDVAEGGLAVALAECCITGNLGLDAVLGANHPRADVVCFGEMAAAIIVTIDPCDQVACELWLECSLAERWKLLGTVAAQSFDLRVENRDCRISTSCERLKTTFEQAIPRRMEHIPVTEAPQR.

H51 is an active-site residue. 2 residues coordinate ATP: Y54 and K93. Residue E95 coordinates Mg(2+). Residues 96–99 and R118 contribute to the substrate site; that span reads SHNH. Catalysis depends on H97, which acts as the Proton acceptor. D119 lines the Mg(2+) pocket. Q242 lines the substrate pocket. Residue D270 coordinates Mg(2+). 314–316 contributes to the substrate binding site; it reads ESQ. D514 and G551 together coordinate ATP. Residue N552 coordinates Mg(2+). S554 provides a ligand contact to substrate.

It belongs to the FGAMS family. As to quaternary structure, monomer. Part of the FGAM synthase complex composed of 1 PurL, 1 PurQ and 2 PurS subunits.

Its subcellular location is the cytoplasm. The enzyme catalyses N(2)-formyl-N(1)-(5-phospho-beta-D-ribosyl)glycinamide + L-glutamine + ATP + H2O = 2-formamido-N(1)-(5-O-phospho-beta-D-ribosyl)acetamidine + L-glutamate + ADP + phosphate + H(+). It participates in purine metabolism; IMP biosynthesis via de novo pathway; 5-amino-1-(5-phospho-D-ribosyl)imidazole from N(2)-formyl-N(1)-(5-phospho-D-ribosyl)glycinamide: step 1/2. Part of the phosphoribosylformylglycinamidine synthase complex involved in the purines biosynthetic pathway. Catalyzes the ATP-dependent conversion of formylglycinamide ribonucleotide (FGAR) and glutamine to yield formylglycinamidine ribonucleotide (FGAM) and glutamate. The FGAM synthase complex is composed of three subunits. PurQ produces an ammonia molecule by converting glutamine to glutamate. PurL transfers the ammonia molecule to FGAR to form FGAM in an ATP-dependent manner. PurS interacts with PurQ and PurL and is thought to assist in the transfer of the ammonia molecule from PurQ to PurL. The polypeptide is Phosphoribosylformylglycinamidine synthase subunit PurL (Gloeobacter violaceus (strain ATCC 29082 / PCC 7421)).